A 142-amino-acid polypeptide reads, in one-letter code: Large ribosomal subunit protein uL13 (142 aa).

It belongs to the universal ribosomal protein uL13 family. In terms of assembly, part of the 50S ribosomal subunit.

This protein is one of the early assembly proteins of the 50S ribosomal subunit, although it is not seen to bind rRNA by itself. It is important during the early stages of 50S assembly. In Methanosphaera stadtmanae (strain ATCC 43021 / DSM 3091 / JCM 11832 / MCB-3), this protein is Large ribosomal subunit protein uL13.